A 158-amino-acid chain; its full sequence is MPPRRKKKAAAAAAAAAAAAAAAGKAAAGKDGKAGIMTPKKPKKGKKKIPLMKYRVYIRRVLTQVRPELGISSKSMLIMNNFVVHNFQNIAKEASILAQYSKKKTITVKELKAAVKLVLPHQLLEYADRDGDRAVHNFESETSKKNSQGRKRGRGQQT.

An N6-acetyllysine mark is found at Lys-7 and Lys-25. Disordered stretches follow at residues 26 to 45 (AAAG…PKKG) and 135 to 158 (VHNF…GQQT). The segment covering 135–144 (VHNFESETSK) has biased composition (basic and acidic residues). Basic residues predominate over residues 147–158 (SQGRKRGRGQQT).

Belongs to the histone H2B family. As to quaternary structure, the nucleosome is a histone octamer containing two molecules each of H2A, H2B, H3 and H4 assembled in one H3-H4 heterotetramer and two H2A-H2B heterodimers. The octamer wraps approximately 147 bp of DNA. Can be acetylated to form H2BK6ac and H2BK33ac. In terms of tissue distribution, expressed in the generative cell within the bicellular pollen. Not detected in other reproductive or vegetative tissues.

The protein resides in the nucleus. It is found in the chromosome. In terms of biological role, core component of nucleosome. Nucleosomes wrap and compact DNA into chromatin, limiting DNA accessibility to the cellular machineries which require DNA as a template. Histones thereby play a central role in transcription regulation, DNA repair, DNA replication and chromosomal stability. DNA accessibility is regulated via a complex set of post-translational modifications of histones, also called histone code, and nucleosome remodeling. In Lilium longiflorum (Trumpet lily), this protein is Histone H2B.1.